A 152-amino-acid chain; its full sequence is FMN reductase (NADH) RutF (152 aa).

Belongs to the non-flavoprotein flavin reductase family. RutF subfamily.

The catalysed reaction is FMNH2 + NAD(+) = FMN + NADH + 2 H(+). Functionally, catalyzes the reduction of FMN to FMNH2 which is used to reduce pyrimidine by RutA via the Rut pathway. The chain is FMN reductase (NADH) RutF from Shigella flexneri.